Consider the following 134-residue polypeptide: MAISLKVLAPNKNVYQGEAEEVILPSTTGQLGILPGHISLVTAIDIGVLRLRMNSQWKSIALMGGFAEIESDEVIVLVNNAEIGSEINVQNAEQDLKEAKLAISKFSENEKNPEKIKALKEISKAEARIQAAKN.

Belongs to the ATPase epsilon chain family. As to quaternary structure, F-type ATPases have 2 components, CF(1) - the catalytic core - and CF(0) - the membrane proton channel. CF(1) has five subunits: alpha(3), beta(3), gamma(1), delta(1), epsilon(1). CF(0) has three main subunits: a, b and c.

It localises to the cellular thylakoid membrane. Functionally, produces ATP from ADP in the presence of a proton gradient across the membrane. The sequence is that of ATP synthase epsilon chain from Prochlorococcus marinus (strain AS9601).